The sequence spans 812 residues: Probable inorganic carbon transporter subunit DabA (812 aa).

Cysteine 337, aspartate 339, histidine 499, and cysteine 514 together coordinate Zn(2+).

Belongs to the inorganic carbon transporter (TC 9.A.2) DabA family. In terms of assembly, forms a complex with DabB. The cofactor is Zn(2+).

Its subcellular location is the cell inner membrane. Part of an energy-coupled inorganic carbon pump. The chain is Probable inorganic carbon transporter subunit DabA from Xanthomonas euvesicatoria pv. vesicatoria (strain 85-10) (Xanthomonas campestris pv. vesicatoria).